We begin with the raw amino-acid sequence, 315 residues long: Long form salivary protein D7L2 (315 aa).

The N-terminal stretch at 1–18 (MIVAPVVLSIFLQLFVQA) is a signal peptide. Cystine bridges form between Cys37-Cys73, Cys69-Cys128, Cys178-Cys211, and Cys252-Cys263.

This sequence belongs to the PBP/GOBP family. In terms of assembly, interacts with host coagulation factor XII/F12 (inactive and activated). Interacts with host coagulation factor XI/F11 (inactive).

It localises to the secreted. Its function is as follows. Modulates blood feeding of female mosquitoes on vertebrate species by binding and sequestering different mediators involved in the host response. Binds leukotriene B4 and leukotriene D4. Exhibits anticoagulant activity targeting the intrinsic coagulation pathway; binds coagulation factors XII and XI, preventing generation of activated FXIIa and FXIa. The polypeptide is Long form salivary protein D7L2 (Anopheles gambiae (African malaria mosquito)).